We begin with the raw amino-acid sequence, 216 residues long: 4-hydroxy-tetrahydrodipicolinate reductase (216 aa).

NAD(+)-binding positions include 9-12 (SGRM), 71-73 (GTT), and 95-98 (AYNF). His-127 functions as the Proton donor/acceptor in the catalytic mechanism. Residue His-128 coordinates (S)-2,3,4,5-tetrahydrodipicolinate. Lys-131 is an NAD(+) binding site. Lys-131 functions as the Proton donor in the catalytic mechanism. 137 to 138 (GT) contacts (S)-2,3,4,5-tetrahydrodipicolinate.

The protein belongs to the DapB family. As to quaternary structure, homotetramer.

It localises to the cytoplasm. The catalysed reaction is (S)-2,3,4,5-tetrahydrodipicolinate + NAD(+) + H2O = (2S,4S)-4-hydroxy-2,3,4,5-tetrahydrodipicolinate + NADH + H(+). The enzyme catalyses (S)-2,3,4,5-tetrahydrodipicolinate + NADP(+) + H2O = (2S,4S)-4-hydroxy-2,3,4,5-tetrahydrodipicolinate + NADPH + H(+). Its pathway is amino-acid biosynthesis; L-lysine biosynthesis via DAP pathway; (S)-tetrahydrodipicolinate from L-aspartate: step 4/4. Its activity is regulated as follows. Is inhibited by high concentrations of NADH. In terms of biological role, catalyzes the conversion of 4-hydroxy-tetrahydrodipicolinate (HTPA) to tetrahydrodipicolinate. Uses NADPH as a reductant with much more efficiency than NADH. The sequence is that of 4-hydroxy-tetrahydrodipicolinate reductase from Thermotoga maritima (strain ATCC 43589 / DSM 3109 / JCM 10099 / NBRC 100826 / MSB8).